A 309-amino-acid chain; its full sequence is Ornithine carbamoyltransferase (309 aa).

Carbamoyl phosphate contacts are provided by residues 57–60 (STRT), Gln84, Arg108, and 135–138 (HPCQ). L-ornithine is bound by residues Asn166, Asp224, and 228-229 (SM). Carbamoyl phosphate is bound by residues 264–265 (CL) and Arg292.

The protein belongs to the aspartate/ornithine carbamoyltransferase superfamily. OTCase family.

Its subcellular location is the cytoplasm. The enzyme catalyses carbamoyl phosphate + L-ornithine = L-citrulline + phosphate + H(+). It participates in amino-acid biosynthesis; L-arginine biosynthesis; L-arginine from L-ornithine and carbamoyl phosphate: step 1/3. In terms of biological role, reversibly catalyzes the transfer of the carbamoyl group from carbamoyl phosphate (CP) to the N(epsilon) atom of ornithine (ORN) to produce L-citrulline. In Paracidovorax citrulli (strain AAC00-1) (Acidovorax citrulli), this protein is Ornithine carbamoyltransferase.